Consider the following 336-residue polypeptide: Protease HtpX homolog (336 aa).

2 consecutive transmembrane segments (helical) span residues 7 to 24 (AMLL…GFLI) and 29 to 48 (GMMI…YWNA). Residue histidine 130 participates in Zn(2+) binding. Residue glutamate 131 is part of the active site. Residue histidine 134 coordinates Zn(2+). 2 helical membrane-spanning segments follow: residues 145–165 (IVAT…FLGG) and 171–191 (PFGF…AMIV). Residue glutamate 200 participates in Zn(2+) binding. Positions 278-287 (QQMAGGTQAA) are enriched in low complexity. The tract at residues 278–336 (QQMAGGTQAAPRPTPRQAGEQQPSGPWGQAPQAEQPAEPERPKANPWGRNPTGPKGRWS) is disordered.

The protein belongs to the peptidase M48B family. The cofactor is Zn(2+).

It is found in the cell inner membrane. This chain is Protease HtpX homolog, found in Mesorhizobium japonicum (strain LMG 29417 / CECT 9101 / MAFF 303099) (Mesorhizobium loti (strain MAFF 303099)).